The chain runs to 450 residues: Bifunctional protein GlmU (450 aa).

The segment at 1–229 (MGVALIVLAA…EAETLGINTR (229 aa)) is pyrophosphorylase. UDP-N-acetyl-alpha-D-glucosamine is bound by residues 8–11 (LAAG), K22, Q75, 80–81 (GT), 103–105 (YGD), G141, E155, N170, and N227. D105 contacts Mg(2+). N227 serves as a coordination point for Mg(2+). The linker stretch occupies residues 230–250 (TELAAAEQAFQARARARALED). Residues 251–450 (GVTLADPATT…RARKSAKGAQ (200 aa)) are N-acetyltransferase. Residues R316 and K334 each coordinate UDP-N-acetyl-alpha-D-glucosamine. The active-site Proton acceptor is H346. Residues Y349 and N360 each contribute to the UDP-N-acetyl-alpha-D-glucosamine site. Residues A363, 369-370 (NY), S388, T406, and R423 each bind acetyl-CoA.

In the N-terminal section; belongs to the N-acetylglucosamine-1-phosphate uridyltransferase family. The protein in the C-terminal section; belongs to the transferase hexapeptide repeat family. In terms of assembly, homotrimer. The cofactor is Mg(2+).

It localises to the cytoplasm. It catalyses the reaction alpha-D-glucosamine 1-phosphate + acetyl-CoA = N-acetyl-alpha-D-glucosamine 1-phosphate + CoA + H(+). It carries out the reaction N-acetyl-alpha-D-glucosamine 1-phosphate + UTP + H(+) = UDP-N-acetyl-alpha-D-glucosamine + diphosphate. The protein operates within nucleotide-sugar biosynthesis; UDP-N-acetyl-alpha-D-glucosamine biosynthesis; N-acetyl-alpha-D-glucosamine 1-phosphate from alpha-D-glucosamine 6-phosphate (route II): step 2/2. It functions in the pathway nucleotide-sugar biosynthesis; UDP-N-acetyl-alpha-D-glucosamine biosynthesis; UDP-N-acetyl-alpha-D-glucosamine from N-acetyl-alpha-D-glucosamine 1-phosphate: step 1/1. Its pathway is bacterial outer membrane biogenesis; LPS lipid A biosynthesis. Its function is as follows. Catalyzes the last two sequential reactions in the de novo biosynthetic pathway for UDP-N-acetylglucosamine (UDP-GlcNAc). The C-terminal domain catalyzes the transfer of acetyl group from acetyl coenzyme A to glucosamine-1-phosphate (GlcN-1-P) to produce N-acetylglucosamine-1-phosphate (GlcNAc-1-P), which is converted into UDP-GlcNAc by the transfer of uridine 5-monophosphate (from uridine 5-triphosphate), a reaction catalyzed by the N-terminal domain. This Dinoroseobacter shibae (strain DSM 16493 / NCIMB 14021 / DFL 12) protein is Bifunctional protein GlmU.